The chain runs to 395 residues: Phosphoglycerate kinase (395 aa).

Substrate contacts are provided by residues 21–23 (DFN), R36, 59–62 (HLGR), R120, and R153. ATP-binding positions include K203, G294, E325, and 351-354 (GGDS).

It belongs to the phosphoglycerate kinase family. In terms of assembly, monomer.

It is found in the cytoplasm. The enzyme catalyses (2R)-3-phosphoglycerate + ATP = (2R)-3-phospho-glyceroyl phosphate + ADP. It functions in the pathway carbohydrate degradation; glycolysis; pyruvate from D-glyceraldehyde 3-phosphate: step 2/5. This is Phosphoglycerate kinase from Finegoldia magna (strain ATCC 29328 / DSM 20472 / WAL 2508) (Peptostreptococcus magnus).